The chain runs to 348 residues: Phosphate acyltransferase (348 aa).

Belongs to the PlsX family. Homodimer. Probably interacts with PlsY.

It localises to the cytoplasm. It catalyses the reaction a fatty acyl-[ACP] + phosphate = an acyl phosphate + holo-[ACP]. It functions in the pathway lipid metabolism; phospholipid metabolism. Catalyzes the reversible formation of acyl-phosphate (acyl-PO(4)) from acyl-[acyl-carrier-protein] (acyl-ACP). This enzyme utilizes acyl-ACP as fatty acyl donor, but not acyl-CoA. This chain is Phosphate acyltransferase, found in Francisella tularensis subsp. novicida (strain U112).